A 551-amino-acid polypeptide reads, in one-letter code: Rqc2 homolog RqcH (551 aa).

The required for fibronectin binding stretch occupies residues 363–551 (YQKLKEAVKY…SKKIASMKKS (189 aa)).

It belongs to the NEMF family. As to quaternary structure, associates with stalled 50S ribosomal subunits, binds to RqcP. Interacts with human fibronectin.

It is found in the cell surface. It localises to the cytoplasm. Its function is as follows. Key component of the ribosome quality control system (RQC), a ribosome-associated complex that mediates the extraction of incompletely synthesized nascent chains from stalled ribosomes and their subsequent degradation. RqcH recruits Ala-charged tRNA, and with RqcP directs the elongation of stalled nascent chains on 50S ribosomal subunits, leading to non-templated C-terminal alanine extensions (Ala tail). The Ala tail promotes nascent chain degradation. May add between 1 and at least 8 Ala residues. Binds to stalled 50S ribosomal subunits. Recombinant protein binds to immobilized human fibronectin; binding is saturable and competed by heparin. Recombinant protein inhibits binding of whole cells to fibronectin. This Streptococcus pneumoniae (strain ATCC BAA-255 / R6) protein is Rqc2 homolog RqcH.